The primary structure comprises 279 residues: Pantothenate synthetase (279 aa).

Residue 26-33 coordinates ATP; that stretch reads MGNLHDGH. The Proton donor role is filled by histidine 33. Position 57 (glutamine 57) interacts with (R)-pantoate. Glutamine 57 provides a ligand contact to beta-alanine. ATP is bound at residue 144–147; sequence GKKD. Glutamine 150 is a (R)-pantoate binding site. 181 to 184 is an ATP binding site; it reads LSSR.

Belongs to the pantothenate synthetase family. Homodimer.

It localises to the cytoplasm. The enzyme catalyses (R)-pantoate + beta-alanine + ATP = (R)-pantothenate + AMP + diphosphate + H(+). Its pathway is cofactor biosynthesis; (R)-pantothenate biosynthesis; (R)-pantothenate from (R)-pantoate and beta-alanine: step 1/1. In terms of biological role, catalyzes the condensation of pantoate with beta-alanine in an ATP-dependent reaction via a pantoyl-adenylate intermediate. The protein is Pantothenate synthetase of Herminiimonas arsenicoxydans.